Reading from the N-terminus, the 547-residue chain is Probable terpene synthase 3 (547 aa).

Asp298, Asp302, and Glu451 together coordinate Mg(2+). The DDXXD motif signature appears at Asp298–Asp302.

It belongs to the terpene synthase family. Mg(2+) is required as a cofactor.

Its function is as follows. Probable sesquiterpene synthase. The polypeptide is Probable terpene synthase 3 (TPS3) (Ricinus communis (Castor bean)).